The following is a 628-amino-acid chain: Eukaryotic peptide chain release factor GTP-binding subunit ERF3B (628 aa).

A compositionally biased stretch (low complexity) spans 1–10; the sequence is MDSGSSSSDS. 3 disordered regions span residues 1–44, 71–124, and 146–191; these read MDSG…REPL, SFLR…LEGS, and LEES…KSKS. One can recognise a tr-type G domain in the interval 201 to 425; the sequence is KEHVNVVFIG…YLDNLPNFNR (225 aa). The segment at 210–217 is G1; the sequence is GHVDAGKS. 213 to 218 contributes to the GTP binding site; the sequence is DAGKST. The tract at residues 266–270 is G2; it reads GKTVE. Residues 287 to 290 form a G3 region; it reads DAPG. Residues 349 to 352 and 391 to 393 contribute to the GTP site; these read NKMD and SGL. Residues 349–352 are G4; sequence NKMD. The interval 391 to 393 is G5; that stretch reads SGL.

The protein belongs to the TRAFAC class translation factor GTPase superfamily. Classic translation factor GTPase family. ERF3 subfamily. In terms of assembly, component of the eRF1-eRF3-GTP ternary complex, composed of ETF1/ERF1 and ERF3 (GSPT1/ERF3A or GSPT2/ERF3B) and GTP. Component of the transient SURF (SMG1-UPF1-eRF1-eRF3) complex. Interacts with UPF1 and PABPC1.

It localises to the cytoplasm. The catalysed reaction is GTP + H2O = GDP + phosphate + H(+). Its function is as follows. GTPase component of the eRF1-eRF3-GTP ternary complex, a ternary complex that mediates translation termination in response to the termination codons UAA, UAG and UGA. GSPT2/ERF3B mediates ETF1/ERF1 delivery to stop codons: The eRF1-eRF3-GTP complex binds to a stop codon in the ribosomal A-site. GTP hydrolysis by GSPT2/ERF3B induces a conformational change that leads to its dissociation, permitting ETF1/ERF1 to accommodate fully in the A-site. Component of the transient SURF complex which recruits UPF1 to stalled ribosomes in the context of nonsense-mediated decay (NMD) of mRNAs containing premature stop codons. In Pongo abelii (Sumatran orangutan), this protein is Eukaryotic peptide chain release factor GTP-binding subunit ERF3B (GSPT2).